The following is a 140-amino-acid chain: MCLNIFRTFKSYFGCNITFVPKESALVGIGGCIGSVARYQINEWIPSLLGTFIVNVLGCIAIGFLMYESIYFGAFSRNSRLFLGAGLIGSFTTFSAFATQTIEAGLFYGIIFIAANILCGLMGVFIGRQIILRGRRSWNI.

3 helical membrane-spanning segments follow: residues 45–65 (IPSL…IGFL), 82–102 (FLGA…TQTI), and 106–126 (LFYG…GVFI). Na(+)-binding residues include Gly89 and Thr92.

It belongs to the fluoride channel Fluc/FEX (TC 1.A.43) family.

The protein localises to the cell membrane. It carries out the reaction fluoride(in) = fluoride(out). With respect to regulation, na(+) is not transported, but it plays an essential structural role and its presence is essential for fluoride channel function. Functionally, fluoride-specific ion channel. Important for reducing fluoride concentration in the cell, thus reducing its toxicity. The polypeptide is Fluoride-specific ion channel FluC 1 (Methanospirillum hungatei JF-1 (strain ATCC 27890 / DSM 864 / NBRC 100397 / JF-1)).